The primary structure comprises 381 residues: CD2 homolog (381 aa).

Positions 1 to 16 are cleaved as a signal peptide; it reads MIIKLIFLICFKIVLS. Over 17–208 the chain is Extracellular; it reads INYWVRYNDT…QNYFLENIHT (192 aa). N24, N73, N77, N85, N91, N104, N121, N133, N144, N176, N183, and N189 each carry an N-linked (GlcNAc...) asparagine; by host glycan. 2 disulfide bridges follow: C122–C190 and C129–C173. A helical transmembrane segment spans residues 209–229; the sequence is LFYMIIFIVSGITISIFISII. Topologically, residues 230–381 are cytoplasmic; that stretch reads TFLSLRKRKK…ISLIHVDRII (152 aa). A disordered region spans residues 243–278; the sequence is EIESPPPESNEEEQCQHDDTTSIHEPSPREPLLPKP. Residues 256–270 show a composition bias toward basic and acidic residues; sequence QCQHDDTTSIHEPSP. A run of 7 repeats spans residues 305–310, 311–316, 317–322, 323–328, 329–334, 335–340, and 341–346. Residues 305-334 form a 7 X 6 AA tandem repeats of K-[LP]-C-[PRS]-[PS]-[PS] region; it reads KPCPPPKPCPPPKPCPPPKPCPPPKPCPPP. The interval 341–362 is disordered; sequence KPCPPPESYSPPKPLPSIPLLP.

It belongs to the asfivirus CD2 homolog protein family. Both glycosylated and nonglycosylated forms interact (via C-terminus) with the host AP-1 complex. Post-translationally, cleaved into two fragments of 63 kDa and 26 kDa containing respectively the glycosylated N-terminus and the nonglycosylated C-terminus. A full-length 89-kDa glycosylated form also exists.

Its subcellular location is the host membrane. It localises to the virion membrane. The protein resides in the host Golgi apparatus. May play an immunosuppressive role by inhibiting lymphocyte proliferation and subsequently facilitating viral replication and generalization of infection. Responsible for viral hemadsorption, which may help viral spread. Increases virus replication in the tick vector at the step of virus uptake or replication in the tick gut. May play a role in the host Golgi reorganization to yield viral factories. May play a role in host cell penetration. This African swine fever virus (isolate Warthog/Namibia/Wart80/1980) (ASFV) protein is CD2 homolog.